The following is a 502-amino-acid chain: Basic immunoglobulin-like variable motif-containing protein (502 aa).

Disordered stretches follow at residues 1-32 and 438-460; these read MPNA…LQGA and SQHP…SKKQ. A compositionally biased stretch (basic and acidic residues) spans 12 to 26; that stretch reads DPGHGEHTSENKSPE.

It belongs to the BIVM family.

It is found in the cytoplasm. The protein resides in the nucleus. In Mus musculus (Mouse), this protein is Basic immunoglobulin-like variable motif-containing protein (Bivm).